Here is a 309-residue protein sequence, read N- to C-terminus: uncharacterized protein (309 aa).

Solcar repeat units follow at residues 6–83 (SDLY…LCHS), 97–211 (LTGY…FKRL), and 216–302 (NDKA…VSLL). Transmembrane regions (helical) follow at residues 12-32 (ITAG…FEYL), 47-67 (IILP…VAAF), 100-120 (YNLL…IIPF), 184-204 (VQGT…QFTA), 222-242 (VITG…IDVV), and 285-305 (VGIS…LLGF).

The protein belongs to the mitochondrial carrier (TC 2.A.29) family.

It localises to the mitochondrion inner membrane. This is an uncharacterized protein from Saccharomyces cerevisiae (strain ATCC 204508 / S288c) (Baker's yeast).